The sequence spans 249 residues: Metallo-beta-lactamase type 2 (249 aa).

An N-terminal signal peptide occupies residues 1-22 (MMKKMKWALVLALGLTGLNAFG). Zn(2+) contacts are provided by His-98, His-100, Asp-102, His-161, and Cys-180. Position 183 (Lys-183) interacts with substrate. His-222 serves as a coordination point for Zn(2+).

It belongs to the metallo-beta-lactamase superfamily. Class-B beta-lactamase family. Monomer. The cofactor is Zn(2+).

It is found in the periplasm. The catalysed reaction is a beta-lactam + H2O = a substituted beta-amino acid. Its function is as follows. Confers resistance to the different beta-lactams antibiotics (penicillin, cephalosporin and carbapenem) via the hydrolysis of the beta-lactam ring. The polypeptide is Metallo-beta-lactamase type 2 (blaB4) (Elizabethkingia meningoseptica (Chryseobacterium meningosepticum)).